A 460-amino-acid chain; its full sequence is UDP-N-acetylmuramate--L-alanine ligase (460 aa).

ATP is bound at residue 112–118 (GTHGKTT).

This sequence belongs to the MurCDEF family.

The protein localises to the cytoplasm. The enzyme catalyses UDP-N-acetyl-alpha-D-muramate + L-alanine + ATP = UDP-N-acetyl-alpha-D-muramoyl-L-alanine + ADP + phosphate + H(+). Its pathway is cell wall biogenesis; peptidoglycan biosynthesis. Cell wall formation. In Pelobacter propionicus (strain DSM 2379 / NBRC 103807 / OttBd1), this protein is UDP-N-acetylmuramate--L-alanine ligase.